The following is a 97-amino-acid chain: MGWKSHGFRFKSGRKLRKKVREKGVRIRKFLQTFDVGQRVHIDIEPASQKGMPHPRFQGRTGVVIGQRGRAYLVQVRDGGKMKTLIVRPEHLKPQSG.

This sequence belongs to the eukaryotic ribosomal protein eL21 family.

In Archaeoglobus fulgidus (strain ATCC 49558 / DSM 4304 / JCM 9628 / NBRC 100126 / VC-16), this protein is Large ribosomal subunit protein eL21 (rpl21e).